We begin with the raw amino-acid sequence, 75 residues long: Small ribosomal subunit protein bS18 (75 aa).

The protein belongs to the bacterial ribosomal protein bS18 family. In terms of assembly, part of the 30S ribosomal subunit. Forms a tight heterodimer with protein bS6.

Functionally, binds as a heterodimer with protein bS6 to the central domain of the 16S rRNA, where it helps stabilize the platform of the 30S subunit. This is Small ribosomal subunit protein bS18 from Buchnera aphidicola subsp. Schizaphis graminum (strain Sg).